Here is a 460-residue protein sequence, read N- to C-terminus: MAGKSIFDKLWERHVITGQEGQPQLMYVDQHYIHEVTSPQAFQGLRDAGRKVRRPDLTFGTFDHNVPTVNIYDIRDVISKAQIDKLSENVKDFGIEHAAHGSELQGIVHMVGPETGKTQPGKFIVCGDSHTATHGAFGAIAFGIGTSEVEHVFATQTIWQVKPKKMLVKFTGVPPKGVYSKDFILALIARYGVAAGVGHVVEYAGDAIEHLTMEERMTICNMSIEFGSKMGIMNPDQKTYDYVQGRPGAPKDFEAAVADWKTLVSDPDAVYDKVIEIDVSQLAPMVTWGTNPSMGVEFGAAFPEIRDMNDERAYNYMDLSPGKKAEDIDLGYIFIGSCTNARLSDLQLAAKFVAGKHIAPNLTAIVVPGSRPVKRVAEKMGLDKIFMDAGFEWRDPGCSMCLGMNPDKVPDGVHCASTSNRNFEDRQGFGAKTHLCSPAMAAAAAIAGRFVDIRQLPEVQ.

C338, C398, and C401 together coordinate [4Fe-4S] cluster.

Belongs to the aconitase/IPM isomerase family. LeuC type 1 subfamily. As to quaternary structure, heterodimer of LeuC and LeuD. [4Fe-4S] cluster serves as cofactor.

The enzyme catalyses (2R,3S)-3-isopropylmalate = (2S)-2-isopropylmalate. It participates in amino-acid biosynthesis; L-leucine biosynthesis; L-leucine from 3-methyl-2-oxobutanoate: step 2/4. In terms of biological role, catalyzes the isomerization between 2-isopropylmalate and 3-isopropylmalate, via the formation of 2-isopropylmaleate. This Streptococcus gordonii (strain Challis / ATCC 35105 / BCRC 15272 / CH1 / DL1 / V288) protein is 3-isopropylmalate dehydratase large subunit.